Here is a 441-residue protein sequence, read N- to C-terminus: Protein translocase subunit SecY (441 aa).

The next 10 helical transmembrane spans lie at 25-45, 78-98, 126-146, 155-175, 184-204, 218-238, 275-295, 318-338, 376-396, and 398-418; these read YFVI…IPGI, IFAL…ILTL, LILA…IPGL, ISFY…LMWL, IGNG…PSSF, VLLF…VVYI, VIPA…ASWF, YILT…GLAF, FLGS…RFFM, and VPFY…IDFI.

The protein belongs to the SecY/SEC61-alpha family. In terms of assembly, component of the Sec protein translocase complex. Heterotrimer consisting of SecY, SecE and SecG subunits. The heterotrimers can form oligomers, although 1 heterotrimer is thought to be able to translocate proteins. Interacts with the ribosome. Interacts with SecDF, and other proteins may be involved. Interacts with SecA.

Its subcellular location is the cell membrane. In terms of biological role, the central subunit of the protein translocation channel SecYEG. Consists of two halves formed by TMs 1-5 and 6-10. These two domains form a lateral gate at the front which open onto the bilayer between TMs 2 and 7, and are clamped together by SecE at the back. The channel is closed by both a pore ring composed of hydrophobic SecY resides and a short helix (helix 2A) on the extracellular side of the membrane which forms a plug. The plug probably moves laterally to allow the channel to open. The ring and the pore may move independently. The chain is Protein translocase subunit SecY from Buchnera aphidicola subsp. Baizongia pistaciae (strain Bp).